The sequence spans 231 residues: Large ribosomal subunit protein uL1 (231 aa).

Belongs to the universal ribosomal protein uL1 family. Part of the 50S ribosomal subunit.

In terms of biological role, binds directly to 23S rRNA. The L1 stalk is quite mobile in the ribosome, and is involved in E site tRNA release. Its function is as follows. Protein L1 is also a translational repressor protein, it controls the translation of the L11 operon by binding to its mRNA. This is Large ribosomal subunit protein uL1 from Acinetobacter baylyi (strain ATCC 33305 / BD413 / ADP1).